Reading from the N-terminus, the 146-residue chain is Hemoglobin subunit beta (146 aa).

The Globin domain occupies 2–146 (QWTAEEKQLI…VAHALARKYH (145 aa)). 2 residues coordinate heme b: H63 and H92.

Belongs to the globin family. In terms of assembly, heterotetramer of two alpha chains and two beta chains. As to expression, red blood cells.

Its function is as follows. Involved in oxygen transport from the lung to the various peripheral tissues. This chain is Hemoglobin subunit beta (HBB), found in Sturnus vulgaris (Starling).